A 446-amino-acid polypeptide reads, in one-letter code: Putative ankyrin repeat protein L273 (446 aa).

6 ANK repeats span residues 71-100, 124-153, 206-237, 245-277, 303-332, and 365-394; these read NGEF…KSNM, DHNK…RMRP, TDIE…KILM, VWVS…KMHV, ELEY…NSYY, and YTDI…QQII.

This Acanthamoeba polyphaga (Amoeba) protein is Putative ankyrin repeat protein L273.